We begin with the raw amino-acid sequence, 108 residues long: Succinate dehydrogenase assembly factor 4, mitochondrial (108 aa).

A compositionally biased stretch (low complexity) spans asparagine 33–asparagine 46. Disordered stretches follow at residues asparagine 33–glutamine 59 and asparagine 79–phenylalanine 108. Residues arginine 95 to phenylalanine 108 show a composition bias toward basic and acidic residues.

Belongs to the SDHAF4 family. As to quaternary structure, interacts with SdhA in its FAD-bound form.

The protein localises to the mitochondrion matrix. Plays an essential role in the assembly of succinate dehydrogenase (SDH), an enzyme complex (also referred to as respiratory complex II) that is a component of both the tricarboxylic acid (TCA) cycle and the mitochondrial electron transport chain, and which couples the oxidation of succinate to fumarate with the reduction of ubiquinone (coenzyme Q) to ubiquinol. Binds to the flavoprotein subunit SdhA in its FAD-bound form, blocking the generation of excess reactive oxygen species (ROS) and facilitating its assembly with the iron-sulfur protein subunit SdhB into the SDH catalytic dimer. The sequence is that of Succinate dehydrogenase assembly factor 4, mitochondrial from Dictyostelium discoideum (Social amoeba).